The chain runs to 137 residues: Large ribosomal subunit protein uL16 (137 aa).

This sequence belongs to the universal ribosomal protein uL16 family. In terms of assembly, part of the 50S ribosomal subunit.

Functionally, binds 23S rRNA and is also seen to make contacts with the A and possibly P site tRNAs. The polypeptide is Large ribosomal subunit protein uL16 (Agrobacterium fabrum (strain C58 / ATCC 33970) (Agrobacterium tumefaciens (strain C58))).